The following is a 281-amino-acid chain: Small ribosomal subunit biogenesis GTPase RsgA (281 aa).

The CP-type G domain occupies 59–212 (QNEFIRPKVA…LIDTPGFSSL (154 aa)). Residues 108–111 (TKAD) and 155–163 (GQSGVGKTT) contribute to the GTP site. The Zn(2+) site is built by Cys-235, Cys-240, His-242, and Cys-250.

It belongs to the TRAFAC class YlqF/YawG GTPase family. RsgA subfamily. As to quaternary structure, monomer. Associates with 30S ribosomal subunit, binds 16S rRNA. Requires Zn(2+) as cofactor.

The protein resides in the cytoplasm. Functionally, one of several proteins that assist in the late maturation steps of the functional core of the 30S ribosomal subunit. Helps release RbfA from mature subunits. May play a role in the assembly of ribosomal proteins into the subunit. Circularly permuted GTPase that catalyzes slow GTP hydrolysis, GTPase activity is stimulated by the 30S ribosomal subunit. The sequence is that of Small ribosomal subunit biogenesis GTPase RsgA from Mycoplasmopsis agalactiae (strain NCTC 10123 / CIP 59.7 / PG2) (Mycoplasma agalactiae).